The primary structure comprises 231 residues: MADDRVAGGATPPPPPPPPPLDASAFTHTPYYCEENVHLLCKELIRSGISDPAGTDLYAVFISNEEKKVPLWYQKASHSGDGFVLWDYHVICIQSRRKNGEVLDLVWDLDSSLPFPCSFIQYVSDAIRPLSFGNSTYRRLFRVIHAPVFLRSFASDRSHMKDHAGNWIQLPPKYESIVAEDGTTNNLNEYITMSMDDVKDLESMADDVYSSKHGVVINETILPEFFSRLPG.

The interval 1-21 (MADDRVAGGATPPPPPPPPPL) is disordered. Positions 11-21 (TPPPPPPPPPL) are enriched in pro residues. Catalysis depends on residues Cys-33, His-89, and Asp-108.

This sequence belongs to the NTAQ1 family. As to quaternary structure, monomer.

It carries out the reaction N-terminal L-glutaminyl-[protein] + H2O = N-terminal L-glutamyl-[protein] + NH4(+). Functionally, mediates the side-chain deamidation of N-terminal glutamine residues to glutamate, an important step in N-end rule pathway of protein degradation. Conversion of the resulting N-terminal glutamine to glutamate renders the protein susceptible to arginylation, polyubiquitination and degradation as specified by the N-end rule. Does not act on substrates with internal or C-terminal glutamine and does not act on non-glutamine residues in any position. The sequence is that of Protein N-terminal glutamine amidohydrolase from Oryza sativa subsp. indica (Rice).